Reading from the N-terminus, the 216-residue chain is Pyrophosphatase PpaX (216 aa).

Asp9 acts as the Nucleophile in catalysis.

The protein belongs to the HAD-like hydrolase superfamily. PpaX family. Mg(2+) serves as cofactor.

It carries out the reaction diphosphate + H2O = 2 phosphate + H(+). Functionally, hydrolyzes pyrophosphate formed during P-Ser-HPr dephosphorylation by HPrK/P. Might play a role in controlling the intracellular pyrophosphate pool. The sequence is that of Pyrophosphatase PpaX from Bacillus anthracis (strain CDC 684 / NRRL 3495).